Here is a 270-residue protein sequence, read N- to C-terminus: Small ribosomal subunit protein eS1 (270 aa).

2 disordered regions span residues 1–21 and 238–270; these read MAVGKNKGTSKGGKKGSKKKV and GGGKGAEVSTGAAEGGVTIDRPEGYEPPVQESV.

It belongs to the eukaryotic ribosomal protein eS1 family. In terms of assembly, component of the small ribosomal subunit. Mature ribosomes consist of a small (40S) and a large (60S) subunit. The 40S subunit contains about 33 different proteins and 1 molecule of RNA (18S). The 60S subunit contains about 49 different proteins and 3 molecules of RNA (28S, 5.8S and 5S).

The protein resides in the cytoplasm. This is Small ribosomal subunit protein eS1 from Aedes aegypti (Yellowfever mosquito).